The chain runs to 690 residues: Kelch-like protein 8 (690 aa).

The 68-residue stretch at 111–178 (CDVELLVAGS…IYTDKIAITM (68 aa)) folds into the BTB domain. A BACK domain is found at 213–314 (CMSLYHFSDI…VGWNFLCEAV (102 aa)). 6 Kelch repeats span residues 383–430 (AIFC…SANG), 431–477 (NLYA…SIEN), 478–524 (VIYA…VIGR), 525–571 (YLFA…VLDG), 572–618 (YLYA…ALGG), and 620–665 (VYAI…WANV).

As to quaternary structure, component of the BCR(kel-8) E3 ubiquitin ligase complex, at least composed of cul-3, kel-8 and rbx-1. Interacts with rpy-1. Expressed in neurons.

The protein localises to the synapse. It functions in the pathway protein modification; protein ubiquitination. Its function is as follows. Substrate-specific adapter of a BCR (BTB-CUL3-RBX1) E3 ubiquitin ligase complex that regulates degradation of glutamate receptors in neurons. The BCR(kel-8) ubiquitin ligase complex mediates ubiquitination and subsequent degradation of rpy-1. Indirectly regulates the protein turnover of glr-1, possibly via ubiquitination and degradation of rpy-1. This is Kelch-like protein 8 (kel-8) from Caenorhabditis elegans.